Consider the following 156-residue polypeptide: Small ribosomal subunit protein uS7 (156 aa).

It belongs to the universal ribosomal protein uS7 family. Part of the 30S ribosomal subunit. Contacts proteins S9 and S11.

Its function is as follows. One of the primary rRNA binding proteins, it binds directly to 16S rRNA where it nucleates assembly of the head domain of the 30S subunit. Is located at the subunit interface close to the decoding center, probably blocks exit of the E-site tRNA. The sequence is that of Small ribosomal subunit protein uS7 from Actinobacillus pleuropneumoniae serotype 5b (strain L20).